The primary structure comprises 432 residues: D-amino acid dehydrogenase (432 aa).

3 to 17 serves as a coordination point for FAD; it reads VVILGSGVVGVTSAW.

Belongs to the DadA oxidoreductase family. Requires FAD as cofactor.

It carries out the reaction a D-alpha-amino acid + A + H2O = a 2-oxocarboxylate + AH2 + NH4(+). It functions in the pathway amino-acid degradation; D-alanine degradation; NH(3) and pyruvate from D-alanine: step 1/1. Its function is as follows. Oxidative deamination of D-amino acids. This is D-amino acid dehydrogenase from Salmonella paratyphi C (strain RKS4594).